Here is a 710-residue protein sequence, read N- to C-terminus: DNA-directed RNA polymerase III subunit RPC5 (710 aa).

Residues 146–155 show a composition bias toward basic and acidic residues; that stretch reads DAKHREREAA. The interval 146-169 is disordered; it reads DAKHREREAANEAGDSSQDEAEED. A phosphoserine mark is found at S161 and S162. Residue K171 forms a Glycyl lysine isopeptide (Lys-Gly) (interchain with G-Cter in SUMO2) linkage. S192 carries the phosphoserine modification. Position 224 is a phosphotyrosine (Y224). K432 participates in a covalent cross-link: Glycyl lysine isopeptide (Lys-Gly) (interchain with G-Cter in SUMO2). A Glycyl lysine isopeptide (Lys-Gly) (interchain with G-Cter in SUMO1); alternate cross-link involves residue K498. K498 is covalently cross-linked (Glycyl lysine isopeptide (Lys-Gly) (interchain with G-Cter in SUMO2); alternate). The segment at 498–526 is disordered; sequence KEEPLSEEEADGAELEAEEEEPMDTAPST. Residues 502-520 show a composition bias toward acidic residues; it reads LSEEEADGAELEAEEEEPM. At S503 the chain carries Phosphoserine. The tract at residues 558-710 is required for Pol III complex stability; the sequence is NPVACELKAF…MWYLKGTVQS (153 aa). K661 is covalently cross-linked (Glycyl lysine isopeptide (Lys-Gly) (interchain with G-Cter in SUMO2)).

In terms of assembly, component of the RNA polymerase III complex consisting of at least 17 subunits: a ten-subunit horseshoe-shaped catalytic core composed of POLR3A/RPC1, POLR3B/RPC2, POLR1C/RPAC1, POLR1D/RPAC2, POLR3K/RPC10, POLR2E/RPABC1, POLR2F/RPABC2, POLR2H/RPABC3, POLR2K/RPABC4 and POLR2L/RPABC5; the stalk composed of two subunits POLR3H/RPC8 and CRCP/RPC9, forming a structural mobile part that protrudes out of the core and functions primarily in transcription initiation; and additional subunits homologous to general transcription factors of the RNA polymerase II machinery, POLR3D/RPC4-POLR3E/RPC5 heterodimer and POLR3/CRPC3-POLR3F/RPC6-POLR3G/RPC7 heterotrimer.

It localises to the nucleus. In terms of biological role, DNA-dependent RNA polymerase catalyzes the transcription of DNA into RNA using the four ribonucleoside triphosphates as substrates. Specific peripheric component of RNA polymerase III (Pol III) which synthesizes small non-coding RNAs including 5S rRNA, snRNAs, tRNAs and miRNAs from at least 500 distinct genomic loci. Assembles with POLR3D/RPC4 forming a subcomplex that binds the Pol III core. Enables recruitment of Pol III at transcription initiation site and drives transcription initiation from both type 2 and type 3 DNA promoters. Required for efficient transcription termination and reinitiation. Plays a key role in sensing and limiting infection by intracellular bacteria and DNA viruses. Acts as a nuclear and cytosolic DNA sensor involved in innate immune response. Can sense non-self dsDNA that serves as template for transcription into dsRNA. The non-self RNA polymerase III transcripts, such as Epstein-Barr virus-encoded RNAs (EBERs) induce type I interferon and NF-kappa-B through the RIG-I pathway. This chain is DNA-directed RNA polymerase III subunit RPC5, found in Mus musculus (Mouse).